We begin with the raw amino-acid sequence, 118 residues long: D-dopachrome decarboxylase (118 aa).

P2 carries the N-acetylproline modification.

This sequence belongs to the MIF family. In terms of assembly, homotrimer.

It is found in the cytoplasm. It carries out the reaction D-dopachrome + H(+) = 5,6-dihydroxyindole + CO2. In terms of biological role, tautomerization of D-dopachrome with decarboxylation to give 5,6-dihydroxyindole (DHI). In Xenopus tropicalis (Western clawed frog), this protein is D-dopachrome decarboxylase (ddt).